The primary structure comprises 221 residues: Leucine rich adaptor protein 1-like (221 aa).

The residue at position 1 (M1) is an N-acetylmethionine. A disordered region spans residues L24 to S81. The span at L28–A39 shows a compositional bias: basic and acidic residues. Residues S48–P75 show a composition bias toward low complexity.

The polypeptide is Leucine rich adaptor protein 1-like (Lurap1l) (Mus musculus (Mouse)).